The chain runs to 321 residues: Putrescine export system permease protein SapB (321 aa).

Over 1–8 (MIIFTLRR) the chain is Cytoplasmic. The helical transmembrane segment at 9–29 (ILLLIVTLFLLTFVGFSLSYF) threads the bilayer. Topologically, residues 30 to 80 (TPHAPLQGASLWNAWVFWFNGLIHWDFGVSSINGQPIAEQLKEVFPATMEL) are periplasmic. Positions 74–302 (FPATMELCIL…SLVIIVNVIS (229 aa)) constitute an ABC transmembrane type-1 domain. The chain crosses the membrane as a helical span at residues 81–101 (CILAFGFALIVGIPVGMIAGI). The Cytoplasmic segment spans residues 102 to 112 (TRHKWQDNLIN). A helical membrane pass occupies residues 113 to 133 (AIALLGFSIPVFWLALLLTLF). Residues 134 to 174 (CSLTLGWLPVSGRFDLLYEVKPITGFALIDAWLSDSPWRDE) are Periplasmic-facing. The chain crosses the membrane as a helical span at residues 175-195 (MIMSAIRHMILPVITLSVAPT). Topologically, residues 196–248 (TEVIRLMRISTIEVYDQNYVKAAATRGLSRFTILRRHVLHNALPPVIPRLGLQ) are cytoplasmic. Residues 249–269 (FSTMLTLAMITEMVFSWPGLG) traverse the membrane as a helical segment. The Periplasmic segment spans residues 270 to 280 (RWLINAIRQQD). A helical membrane pass occupies residues 281-301 (YAAISAGVMVCGSLVIIVNVI). Residues 302–321 (SDILGAMANPLKHKEWYALR) are Cytoplasmic-facing.

The protein belongs to the binding-protein-dependent transport system permease family. OppBC subfamily.

It localises to the cell inner membrane. Functionally, part of a putrescine export transport system, does not play a role in resistance to antimicrobial peptides. The protein is Putrescine export system permease protein SapB (sapB) of Escherichia coli (strain K12).